We begin with the raw amino-acid sequence, 793 residues long: Short transient receptor potential channel 1 (793 aa).

The segment at 1–30 (MMAALYPSTDLSGASSSSLPSSPSSSSPNE) is disordered. Residues 1 to 345 (MMAALYPSTD…FGQMSGYRRK (345 aa)) are Cytoplasmic-facing. Residues 15-28 (SSSSLPSSPSSSSP) show a composition bias toward low complexity. ANK repeat units lie at residues 46–75 (LNEKLFLLACDKGDYYMVKKILEENSSGDL), 83–109 (LGRNAVTITIENENLDILQLLLDYGCQ), 111–156 (ADAL…EYST), and 158–180 (MDVAPVILAAHRNNYEILTMLLK). The Zn(2+) site is built by His-189, Cys-193, Cys-195, and Cys-198. The discontinuously helical intramembrane region spans 346–379 (PTCKKIMTVLTVGIFWPVLSLCYLIAPKSQFGRI). Residues 380–386 (IHTPFMK) lie on the Cytoplasmic side of the membrane. A helical transmembrane segment spans residues 387–404 (FIIHGASYFTFLLLLNLY). Over 405-422 (SLVYNEDKKNTMGPALER) the chain is Extracellular. Residues 423–439 (IDYLLILWIIGMIWSDI) traverse the membrane as a helical segment. The Cytoplasmic segment spans residues 440 to 455 (KRLWYEGLEDFLEESR). A helical membrane pass occupies residues 456-475 (NQLSFVMNSLYLATFALKVV). The Extracellular portion of the chain corresponds to 476–496 (AHNKFHDFADRKDWDAFHPTL). Residues 497-517 (VAEGLFAFANVLSYLRLFFMY) form a helical membrane-spanning segment. Over 518–536 (TTSSILGPLQISMGQMLQD) the chain is Cytoplasmic. Residues 537–558 (FGKFLGMFLLVLFSFTIGLTQL) form a helical membrane-spanning segment. Over 559–623 (YDKGYTSKEQ…GEELQSFVGA (65 aa)) the chain is Extracellular. Residues Cys-571 and Cys-576 are joined by a disulfide bond. The helical transmembrane segment at 624–644 (VIVGTYNVVVVIVLTKLLVAM) threads the bilayer. The Cytoplasmic segment spans residues 645-793 (LHKSFQLIAN…SKYAMFYPRN (149 aa)).

Belongs to the transient receptor (TC 1.A.4) family. STrpC subfamily. TRPC1 sub-subfamily. As to quaternary structure, heterotetramer with TRPC4 and/or TRPC5. Forms a heteromeric ion channel with TRPC4, with a 1:3 TRPC1:TRPC4 stoichiometry. Unlike other TRP channel proteins, does not form a homomeric channel. Interacts with TRPC4AP. Interacts with ITPR3. Interacts with MX1 and RNF24. Interacts with FKBP4. Interacts with PLSCR1. Interacts with PKD2L2. Forms a heterotetramer with PKD2 with a 2:2 stoichiometry; has distinct channel properties separate from PKD2 or TRPC1 homomers alone. In terms of assembly, interacts with isoform 2 of TRPC3. Activation of PRKCA induces phosphorylation of TRPC1 and subsequent Ca2+ entry into cells. Seems to be ubiquitous.

The protein resides in the cell membrane. It catalyses the reaction Ca(2+)(in) = Ca(2+)(out). It carries out the reaction Na(+)(in) = Na(+)(out). The catalysed reaction is Li(+)(in) = Li(+)(out). The enzyme catalyses Cs(+)(in) = Cs(+)(out). May be operated by a phosphatidylinositol second messenger system activated by receptor tyrosine kinases or G-protein coupled receptors. Also activated by intracellular calcium store depletion. Inhibited by xanthine-based inhibitor Pico145. Functionally, forms a receptor-activated non-selective calcium permeant cation channel. Forms a heteromeric ion channel with TRPC4 or TRPC5 that has reduced calcium permeability compared to the homomeric TRPC4 or TRPC5 channel. Also permeable to monovalent ions including sodium, lithium and cesium ions. In terms of biological role, forms a receptor-activated non-selective calcium permeant cation channel. Also activated by intracellular calcium store depletion. The chain is Short transient receptor potential channel 1 (TRPC1) from Homo sapiens (Human).